A 251-amino-acid chain; its full sequence is Triosephosphate isomerase (251 aa).

9-11 lines the substrate pocket; it reads NWK. The active-site Electrophile is H95. The Proton acceptor role is filled by E167. Substrate-binding positions include G173, S213, and 234–235; that span reads GG. S213 carries the post-translational modification Phosphoserine.

It belongs to the triosephosphate isomerase family. As to quaternary structure, homodimer.

It is found in the cytoplasm. The enzyme catalyses D-glyceraldehyde 3-phosphate = dihydroxyacetone phosphate. It functions in the pathway carbohydrate biosynthesis; gluconeogenesis. The protein operates within carbohydrate degradation; glycolysis; D-glyceraldehyde 3-phosphate from glycerone phosphate: step 1/1. Involved in the gluconeogenesis. Catalyzes stereospecifically the conversion of dihydroxyacetone phosphate (DHAP) to D-glyceraldehyde-3-phosphate (G3P). In Priestia megaterium (strain DSM 319 / IMG 1521) (Bacillus megaterium), this protein is Triosephosphate isomerase.